Consider the following 236-residue polypeptide: Probable fimbrial chaperone EcpE (236 aa).

Positions 1–27 are cleaved as a signal peptide; sequence MFRRRGVTLTKALLTAVCMLAAPLTQA.

This sequence belongs to the EcpB/EcpE family.

In terms of biological role, part of the ecpRABCDE operon, which encodes the E.coli common pilus (ECP). ECP is found in both commensal and pathogenic strains and plays a dual role in early-stage biofilm development and host cell recognition. The sequence is that of Probable fimbrial chaperone EcpE (ecpE) from Escherichia coli (strain K12).